Here is a 651-residue protein sequence, read N- to C-terminus: Transcription termination factor FttA (651 aa).

Residues Met-1–Val-200 are archaeal CPSF-KH domain. A KHa region spans residues Asp-12–Leu-79. The KHb stretch occupies residues Leu-80 to Pro-147. The tract at residues Trp-188–Ala-398 is metallo-beta-lactamase N-terminus. Residues His-256, His-258, Asp-260, His-261, His-344, and Asp-367 each contribute to the Zn(2+) site. Residues Asn-399–Ser-592 form a beta-Casp region. Residues Gly-593–Arg-651 form a metallo-beta-lactamase C-terminus region. His-618 contributes to the Zn(2+) binding site.

It belongs to the metallo-beta-lactamase superfamily. RNA-metabolizing metallo-beta-lactamase-like family. FttA subfamily. Homodimer. Interacts with RNA polymerase (RNAP), interacts with the Spt4-Spt5 complex. Zn(2+) serves as cofactor.

In terms of biological role, terminates transcription on the whole genome. Termination is linked to FttA-mediated RNA cleavage and does not require NTP hydrolysis. Cleaves endonucleolytically at the RNA exit channel of RNA polymerase (RNAP); the 5'-3' exonuclease activity of this protein degrades the nascent RNA released from RNAP. Functionally, has nuclease activity on single-stranded RNA. In Pyrococcus horikoshii (strain ATCC 700860 / DSM 12428 / JCM 9974 / NBRC 100139 / OT-3), this protein is Transcription termination factor FttA.